The sequence spans 532 residues: Pre-piRNA 3'-exonuclease trimmer (532 aa).

4 residues coordinate Mg(2+): Asp28, Glu30, Asp270, and Asp365. Residues 503-523 (AGRFAIWSGSIVTGGLALYLI) form a helical membrane-spanning segment.

This sequence belongs to the CAF1 family. As to quaternary structure, interacts with Papi/Tdrkh; interaction takes place on the mitochondrial surface and recruits PNLDC1/trimmer to PIWI-bound pre-piRNAs. Mg(2+) is required as a cofactor.

Its subcellular location is the mitochondrion outer membrane. 3'-5' exonuclease that specifically cleaves precursor piRNAs (pre-piRNAs) at their 3' ends. Trims pre-piRNAs to their mature size, a process required for piRNAs maturation and stabilization, and subsequent pre-piRNAs 2'-O-methylation. The piRNA metabolic process mediates the repression of transposable elements during meiosis by forming complexes composed of piRNAs and Piwi proteins and govern the methylation and subsequent repression of transposons. This chain is Pre-piRNA 3'-exonuclease trimmer, found in Bombyx mori (Silk moth).